The sequence spans 508 residues: Ras association domain-containing protein 10 (508 aa).

In terms of domain architecture, Ras-associating spans 1–133; that stretch reads MDPSEKKISV…VRFVLVRSEA (133 aa). Disordered regions lie at residues 51–81 and 186–221; these read RRGL…AMPP and KLNR…ESAS. Residues 66–78 show a composition bias toward acidic residues; the sequence is EPPDENDEDDDDA. Low complexity predominate over residues 195-214; the sequence is PSSPCSSTSSSTASSCSSSA. 2 coiled-coil regions span residues 235 to 266 and 319 to 358; these read QDHT…DRMR and LEEL…NQRW. A disordered region spans residues 473–508; it reads GLAKSCPGNDEDSDTGLSSMHSQDSDSVPPVCESLV. The segment covering 487-498 has biased composition (polar residues); sequence TGLSSMHSQDSD.

Expressed in neural progenitor cells (at protein level).

It is found in the cytoplasm. It localises to the cytosol. The protein localises to the cytoskeleton. Its subcellular location is the microtubule organizing center. The protein resides in the centrosome. It is found in the spindle pole. Its function is as follows. Plays an important role in regulating embryonic neurogenesis. In Mus musculus (Mouse), this protein is Ras association domain-containing protein 10 (Rassf10).